The chain runs to 877 residues: Translation initiation factor IF-2 (877 aa).

Residues 48–289 (SSFQNSAPAE…QITKRKERPL (242 aa)) form a disordered region. Positions 78–89 (RKNEKKPEENNT) are enriched in basic and acidic residues. Residues 92-101 (KSNRRRNNKR) show a composition bias toward basic residues. Basic and acidic residues predominate over residues 102 to 116 (RSSDRARDNKERDAK). A compositionally biased stretch (low complexity) spans 123-132 (KAAALLQQFK). 2 stretches are compositionally biased toward basic and acidic residues: residues 135–155 (QRAEEGQLNREAQKAKKEYHE) and 162–189 (KEQSEKDNKKTVKESNNKKVEQQVEKKV). Basic residues predominate over residues 277–286 (PRKQITKRKE). In terms of domain architecture, tr-type G spans 378–547 (KRPPVVTIMG…LLQADVMELK (170 aa)). The G1 stretch occupies residues 387-394 (GHVDHGKT). 387–394 (GHVDHGKT) serves as a coordination point for GTP. The tract at residues 412–416 (GITQR) is G2. The segment at 433 to 436 (DTPG) is G3. GTP-binding positions include 433–437 (DTPGH) and 487–490 (NKMD). Residues 487–490 (NKMD) form a G4 region. Residues 523–525 (SAK) are G5.

This sequence belongs to the TRAFAC class translation factor GTPase superfamily. Classic translation factor GTPase family. IF-2 subfamily.

It is found in the cytoplasm. One of the essential components for the initiation of protein synthesis. Protects formylmethionyl-tRNA from spontaneous hydrolysis and promotes its binding to the 30S ribosomal subunits. Also involved in the hydrolysis of GTP during the formation of the 70S ribosomal complex. This chain is Translation initiation factor IF-2, found in Lactobacillus acidophilus (strain ATCC 700396 / NCK56 / N2 / NCFM).